The chain runs to 1543 residues: Tubby-related protein 4 (1543 aa).

WD repeat units lie at residues 6–72 (EHGP…STPQ), 73–115 (RINF…YEGR), 116–158 (WSVE…SGQR), 159–237 (HWSS…SDDY), 238–276 (APPQDGPAAYPIPVQNIKPLLTVSFTSGDISLMNNYDDL), 277–334 (SPTV…GEHI), and 335–372 (FTLDTLVQRPIISICWGHRDSRLLMASGPALYVVRVEH). Residues 364–414 (ALYVVRVEHRVSSLQLLCQQAIASTLREDKDVSKLTLPPRLCSYLSTAFIP) enclose the SOCS box domain. 2 disordered regions span residues 530 to 577 (SPKI…SVGS) and 829 to 850 (TKINPPPPYPGTIPAAPTTAAP). S577 carries the phosphoserine modification. Asymmetric dimethylarginine occurs at positions 945 and 950. Disordered stretches follow at residues 1004–1058 (SPRA…HTAS), 1326–1355 (VPQRTEKFGKKNRKRLDSRAEEGSVQAITE), and 1367–1453 (DFNS…ASEK). A compositionally biased stretch (polar residues) spans 1036 to 1050 (TCSQCSGTGPSSQPG). Residues 1329–1347 (RTEKFGKKNRKRLDSRAEE) show a composition bias toward basic and acidic residues. Phosphoserine is present on residues S1343 and S1374. The segment covering 1443-1453 (EEAKCRRASEK) has biased composition (basic and acidic residues). The TUB stretch occupies residues 1466–1543 (VMANKQPLWN…ALANVTQRLK (78 aa)).

It belongs to the TUB family. Expressed mainly in the brain, skeletal muscle, testis and kidney.

It localises to the cytoplasm. The protein operates within protein modification; protein ubiquitination. Its function is as follows. May be a substrate-recognition component of a SCF-like ECS (Elongin-Cullin-SOCS-box protein) E3 ubiquitin ligase complex which mediates the ubiquitination and subsequent proteasomal degradation of target proteins. This chain is Tubby-related protein 4 (TULP4), found in Homo sapiens (Human).